The primary structure comprises 317 residues: Coproporphyrinogen-III oxidase, aerobic 1 (317 aa).

The tract at residues 38–47 (VLRDGAIFEQ) is important for dimerization. Position 82 (serine 82) interacts with substrate. Histidine 96 serves as the catalytic Proton donor. Residues 98–100 (NYR) and 269–274 (NGRTES) contribute to the substrate site. Residues 251–286 (YVEFNLVYDRGTIFGLQTNGRTESILMSLPPLVRWE) are important for dimerization.

It belongs to the aerobic coproporphyrinogen-III oxidase family. As to quaternary structure, homodimer.

The protein localises to the cytoplasm. The enzyme catalyses coproporphyrinogen III + O2 + 2 H(+) = protoporphyrinogen IX + 2 CO2 + 2 H2O. It functions in the pathway porphyrin-containing compound metabolism; protoporphyrin-IX biosynthesis; protoporphyrinogen-IX from coproporphyrinogen-III (O2 route): step 1/1. Functionally, key enzyme in heme biosynthesis. Catalyzes the oxidative decarboxylation of propionic acid side chains of rings A and B of coproporphyrinogen III. This is Coproporphyrinogen-III oxidase, aerobic 1 from Nostoc sp. (strain PCC 7120 / SAG 25.82 / UTEX 2576).